A 204-amino-acid polypeptide reads, in one-letter code: GTP cyclohydrolase 1 (204 aa).

The Zn(2+) site is built by Cys92, His95, and Cys165.

This sequence belongs to the GTP cyclohydrolase I family. Homomer.

It catalyses the reaction GTP + H2O = 7,8-dihydroneopterin 3'-triphosphate + formate + H(+). Its pathway is cofactor biosynthesis; 7,8-dihydroneopterin triphosphate biosynthesis; 7,8-dihydroneopterin triphosphate from GTP: step 1/1. This is GTP cyclohydrolase 1 from Mycobacterium avium (strain 104).